Reading from the N-terminus, the 265-residue chain is MPEPTFHELAQLPPPVLRQLIRRGDYTGHTSGLGQRHLQANLVILQKSWADEFLRFCALNPRACPLLDVSEPGSPHFARLGADIDVRSDLPRYRVHRRGQEPVEVSDIGTFWEADFVAFAIGCSFSFEQALLDAGIGLRHLELGRNVTMYRSSIATRPSGRLAGPTVVSMRPLKAAEAIRAIQVTSRFPMTHGAPLHLGDPALIGIRDLARPDYGDPVPLAADEIPLFWACGVTPQAVLAEVQPELYISHAPGHMLVSDRLYDEL.

The protein belongs to the D-glutamate cyclase family.

The chain is Putative hydro-lyase PA2116 from Pseudomonas aeruginosa (strain ATCC 15692 / DSM 22644 / CIP 104116 / JCM 14847 / LMG 12228 / 1C / PRS 101 / PAO1).